A 633-amino-acid polypeptide reads, in one-letter code: Putative oligopeptide transporter HI_0561 (633 aa).

15 helical membrane-spanning segments follow: residues 8-28 (GVTFASSIPAAVISMAVLKFF), 45-65 (SAGTLSSVIFVLPGLLMMGYW), 70-90 (FWQTMLICAAGGTLGVLFTIP), 128-148 (IAYGGVLAGLVAFLTNGLRVM), 180-200 (IGIVGGIAMLIGVILTWGVAV), 230-250 (IGVGTIGIAAIWTLLILMKPM), 281-301 (MIYILIATVALIVISLHHFIA), 311-331 (ILLVVVCTFLAVFIGFFVAAA), 345-365 (PISGIGIISVIVISLVLVSIG), 379-399 (FLTALTLFTASIVITTACISN), 420-440 (VALIIGCFVGALVIAPVLEIL), 483-503 (WTYILTGVGLGAVLITIDAFL), 515-535 (VIAVGIGIYLPPSINTPVIVG), 564-584 (LFSAGLIVGESLMGVILAFII), and 604-624 (WDTIGEWFGLIVFIVGIVIFA).

Belongs to the oligopeptide OPT transporter family.

The protein localises to the cell membrane. In Haemophilus influenzae (strain ATCC 51907 / DSM 11121 / KW20 / Rd), this protein is Putative oligopeptide transporter HI_0561.